The sequence spans 510 residues: ATP synthase subunit alpha, mitochondrial (510 aa).

171-178 (GDRQTGKT) provides a ligand contact to ATP.

In terms of assembly, F-type ATP synthases have 2 components, the catalytic core F(1) and the membrane-embedded component F(0), linked together by a central stalk and a peripheral stalk. The central stalk, also called rotor shaft, is often seen as part of F(1). The peripheral stalk is seen as part of F(0). F(0) contains the membrane channel next to the rotor. F-type ATP synthases form dimers but each monomer functions independently in ATP generation. The dimer consists of 18 different polypeptides: ATP1 (subunit alpha, part of F(1), 3 molecules per monomer), ATP2 (subunit beta, part of F(1), 3 molecules per monomer), ATP3 (subunit gamma, part of the central stalk), ATP4 (subunit b, part of the peripheral stalk), ATP5/OSCP (subunit 5/OSCP, part of the peripheral stalk), ATP6 (subunit a, part of the peripheral stalk), ATP7 (subunit d, part of the peripheral stalk), ATP8 (subunit 8, part of the peripheral stalk), OLI1 (subunit c, part of the rotor, 10 molecules per monomer), ATP14 (subunit h, part of the peripheral stalk), ATP15 (subunit epsilon, part of the central stalk), ATP16 (subunit delta, part of the central stalk), ATP17 (subunit f, part of the peripheral stalk), ATP18 (subunit i/j, part of the peripheral stalk). Dimer-specific subunits are ATP19 (subunit k, at interface between monomers), ATP20 (subunit g, at interface between monomers), TIM11 (subunit e, at interface between monomers). Also contains subunit L.

The protein localises to the mitochondrion inner membrane. Its function is as follows. Mitochondrial membrane ATP synthase (F(1)F(0) ATP synthase or Complex V) produces ATP from ADP in the presence of a proton gradient across the membrane which is generated by electron transport complexes of the respiratory chain. F-type ATP synthases consist of two structural domains, F(1) - containing the extramembraneous catalytic core, and F(0) - containing the membrane proton channel, linked together by a central stalk and a peripheral stalk. During catalysis, ATP synthesis in the catalytic domain of F(1) is coupled via a rotary mechanism of the central stalk subunits to proton translocation. Subunits alpha/ATP1 and beta/ATP2 form the catalytic core in F(1). Rotation of the central stalk against the surrounding alpha/ATP1(3)beta/ATP2(3) subunits leads to hydrolysis of ATP in three separate catalytic sites on the beta/ATP2 subunits. Subunit alpha/ATP1 does not bear the catalytic high-affinity ATP-binding sites. This Pichia angusta (Yeast) protein is ATP synthase subunit alpha, mitochondrial.